A 292-amino-acid chain; its full sequence is Homoserine kinase (292 aa).

84–94 (PLSRGLGSSSA) is an ATP binding site.

Belongs to the GHMP kinase family. Homoserine kinase subfamily.

It localises to the cytoplasm. The catalysed reaction is L-homoserine + ATP = O-phospho-L-homoserine + ADP + H(+). It functions in the pathway amino-acid biosynthesis; L-threonine biosynthesis; L-threonine from L-aspartate: step 4/5. Functionally, catalyzes the ATP-dependent phosphorylation of L-homoserine to L-homoserine phosphate. This is Homoserine kinase from Campylobacter jejuni subsp. jejuni serotype O:6 (strain 81116 / NCTC 11828).